We begin with the raw amino-acid sequence, 424 residues long: Methylthioribose-1-phosphate isomerase (424 aa).

The Proton donor role is filled by D281.

It belongs to the eIF-2B alpha/beta/delta subunits family. MtnA subfamily.

The protein localises to the cytoplasm. It localises to the nucleus. It carries out the reaction 5-(methylsulfanyl)-alpha-D-ribose 1-phosphate = 5-(methylsulfanyl)-D-ribulose 1-phosphate. It participates in amino-acid biosynthesis; L-methionine biosynthesis via salvage pathway; L-methionine from S-methyl-5-thio-alpha-D-ribose 1-phosphate: step 1/6. Functionally, catalyzes the interconversion of methylthioribose-1-phosphate (MTR-1-P) into methylthioribulose-1-phosphate (MTRu-1-P). This Candida dubliniensis (strain CD36 / ATCC MYA-646 / CBS 7987 / NCPF 3949 / NRRL Y-17841) (Yeast) protein is Methylthioribose-1-phosphate isomerase.